Reading from the N-terminus, the 987-residue chain is Ephrin type-B receptor 2 (987 aa).

Positions 1–19 (MGPLWFCCLPLALLPLLAA) are cleaved as a signal peptide. The Extracellular segment spans residues 20–544 (VEETLMDSTT…QTSVQEKLPL (525 aa)). An Eph LBD domain is found at 21–203 (EETLMDSTTA…FYRKCPRVIQ (183 aa)). Cystine bridges form between Cys63–Cys185 and Cys98–Cys108. N-linked (GlcNAc...) asparagine glycans are attached at residues Asn266, Asn337, Asn429, Asn478, and Asn483. 2 consecutive Fibronectin type-III domains span residues 325 to 435 (IPSA…TNQA) and 436 to 531 (APSA…TMTE). Residues 545–565 (IIGSSAAGLVFLIAVVVIIIV) form a helical membrane-spanning segment. At 566 to 987 (CNRRGFERAD…QMNQIQSVEV (422 aa)) the chain is on the cytoplasmic side. One can recognise a Protein kinase domain in the interval 622-885 (VKIEQVIGAG…QIVNTLDKMI (264 aa)). ATP-binding positions include 628-636 (IGAGEFGEV) and Lys654. Asp747 functions as the Proton acceptor in the catalytic mechanism. A Glycyl lysine isopeptide (Lys-Gly) (interchain with G-Cter in ubiquitin) cross-link involves residue Lys892. The 65-residue stretch at 914 to 978 (TSFNTVDEWL…LNSIQVMRAQ (65 aa)) folds into the SAM domain. Positions 985–987 (VEV) match the PDZ-binding motif.

It belongs to the protein kinase superfamily. Tyr protein kinase family. Ephrin receptor subfamily. In terms of assembly, heterotetramer upon binding of the ligand. The heterotetramer is composed of an ephrin dimer and a receptor dimer. Oligomerization is probably required to induce biological responses. Post-translationally, ligand binding induces cleavage by matrix metalloproteinases (MMPs) such as MMP7/MMP9, producing an EphB2/N-terminal fragment (NTF) and a C-terminal long fragment (EphB2-LF). EphB2-LF is further cleaved by MMPs, producing EphB2/CTF1 which is further cleaved by the PS1/gamma-secretase producing EphB2/CTF2. Polyubiquitinated; ligand binding stimulates ubiquitination. Ubiquitinated by RNF186 at Lys-892, mainly through 'Lys-27'-linked polyubiquitin chains.

It is found in the cell membrane. The protein resides in the cell projection. The protein localises to the axon. It localises to the dendrite. It carries out the reaction L-tyrosyl-[protein] + ATP = O-phospho-L-tyrosyl-[protein] + ADP + H(+). Its function is as follows. Receptor tyrosine kinase which binds promiscuously transmembrane ephrin-B family ligands residing on adjacent cells, leading to contact-dependent bidirectional signaling into neighboring cells. The signaling pathway downstream of the receptor is referred to as forward signaling while the signaling pathway downstream of the ephrin ligand is referred to as reverse signaling. Functions in axon guidance during development. In addition to axon guidance, also regulates dendritic spines development and maturation and stimulates the formation of excitatory synapses. This chain is Ephrin type-B receptor 2 (EPHB2), found in Coturnix japonica (Japanese quail).